A 583-amino-acid chain; its full sequence is Phosphoglucomutase, cytoplasmic 2 (583 aa).

Arg25 and Ser124 together coordinate alpha-D-glucose 1,6-bisphosphate. The active-site Phosphoserine intermediate is Ser124. Mg(2+) is bound by residues Ser124, Asp300, Asp302, and Asp304. A Phosphoserine modification is found at Ser124. Alpha-D-glucose 1,6-bisphosphate is bound by residues Asp304, Arg305, Thr368, Glu387, Ser389, and Lys400.

This sequence belongs to the phosphohexose mutase family. As to quaternary structure, monomer. The cofactor is Mg(2+).

It localises to the cytoplasm. The catalysed reaction is alpha-D-glucose 1-phosphate = alpha-D-glucose 6-phosphate. It carries out the reaction O-phospho-L-seryl-[protein] + alpha-D-glucose 1-phosphate = alpha-D-glucose 1,6-bisphosphate + L-seryl-[protein]. It catalyses the reaction alpha-D-glucose 1,6-bisphosphate + L-seryl-[protein] = O-phospho-L-seryl-[protein] + alpha-D-glucose 6-phosphate. Its function is as follows. Catalyzes the reversible isomerization of alpha-D-glucose 1-phosphate to alpha-D-glucose 6-phosphate. The mechanism proceeds via the intermediate compound alpha-D-glucose 1,6-bisphosphate. This enzyme participates in both the breakdown and synthesis of glucose. The chain is Phosphoglucomutase, cytoplasmic 2 from Zea mays (Maize).